We begin with the raw amino-acid sequence, 487 residues long: Cytochrome P450 2C5 (487 aa).

C432 serves as a coordination point for heme.

Belongs to the cytochrome P450 family. It depends on heme as a cofactor.

Its subcellular location is the endoplasmic reticulum membrane. It is found in the microsome membrane. The catalysed reaction is an organic molecule + reduced [NADPH--hemoprotein reductase] + O2 = an alcohol + oxidized [NADPH--hemoprotein reductase] + H2O + H(+). Functionally, cytochromes P450 are a group of heme-thiolate monooxygenases. In liver microsomes, this enzyme is involved in an NADPH-dependent electron transport pathway. It oxidizes a variety of structurally unrelated compounds, including steroids, fatty acids, and xenobiotics. The protein is Cytochrome P450 2C5 (CYP2C5) of Oryctolagus cuniculus (Rabbit).